The following is a 492-amino-acid chain: Bifunctional purine biosynthesis protein PurH (492 aa).

Positions 1 to 144 (MKKAILSVSN…KNYKHVTTIV (144 aa)) constitute an MGS-like domain.

The protein belongs to the PurH family.

The enzyme catalyses (6R)-10-formyltetrahydrofolate + 5-amino-1-(5-phospho-beta-D-ribosyl)imidazole-4-carboxamide = 5-formamido-1-(5-phospho-D-ribosyl)imidazole-4-carboxamide + (6S)-5,6,7,8-tetrahydrofolate. It catalyses the reaction IMP + H2O = 5-formamido-1-(5-phospho-D-ribosyl)imidazole-4-carboxamide. Its pathway is purine metabolism; IMP biosynthesis via de novo pathway; 5-formamido-1-(5-phospho-D-ribosyl)imidazole-4-carboxamide from 5-amino-1-(5-phospho-D-ribosyl)imidazole-4-carboxamide (10-formyl THF route): step 1/1. The protein operates within purine metabolism; IMP biosynthesis via de novo pathway; IMP from 5-formamido-1-(5-phospho-D-ribosyl)imidazole-4-carboxamide: step 1/1. This is Bifunctional purine biosynthesis protein PurH from Staphylococcus aureus (strain bovine RF122 / ET3-1).